We begin with the raw amino-acid sequence, 428 residues long: 3-phosphoshikimate 1-carboxyvinyltransferase (428 aa).

3-phosphoshikimate is bound by residues lysine 22, serine 23, and arginine 27. Residue lysine 22 coordinates phosphoenolpyruvate. Glycine 96 and arginine 124 together coordinate phosphoenolpyruvate. 3-phosphoshikimate-binding residues include serine 169, serine 170, glutamine 171, serine 197, aspartate 313, asparagine 336, and lysine 340. Glutamine 171 is a phosphoenolpyruvate binding site. Aspartate 313 acts as the Proton acceptor in catalysis. 3 residues coordinate phosphoenolpyruvate: arginine 344, arginine 386, and lysine 411.

The protein belongs to the EPSP synthase family. As to quaternary structure, monomer.

The protein localises to the cytoplasm. The catalysed reaction is 3-phosphoshikimate + phosphoenolpyruvate = 5-O-(1-carboxyvinyl)-3-phosphoshikimate + phosphate. It participates in metabolic intermediate biosynthesis; chorismate biosynthesis; chorismate from D-erythrose 4-phosphate and phosphoenolpyruvate: step 6/7. Its function is as follows. Catalyzes the transfer of the enolpyruvyl moiety of phosphoenolpyruvate (PEP) to the 5-hydroxyl of shikimate-3-phosphate (S3P) to produce enolpyruvyl shikimate-3-phosphate and inorganic phosphate. The sequence is that of 3-phosphoshikimate 1-carboxyvinyltransferase from Proteus mirabilis (strain HI4320).